The following is a 178-amino-acid chain: Putative pre-16S rRNA nuclease (178 aa).

A compositionally biased stretch (basic and acidic residues) spans 1 to 18 (MDHAEQGPDRPGVDDPGR). Residues 1 to 21 (MDHAEQGPDRPGVDDPGRGRR) form a disordered region.

It belongs to the YqgF nuclease family.

It localises to the cytoplasm. Functionally, could be a nuclease involved in processing of the 5'-end of pre-16S rRNA. In Rhodococcus jostii (strain RHA1), this protein is Putative pre-16S rRNA nuclease.